The primary structure comprises 252 residues: Imidazole glycerol phosphate synthase subunit HisF (252 aa).

Residues aspartate 11 and aspartate 130 contribute to the active site.

This sequence belongs to the HisA/HisF family. In terms of assembly, heterodimer of HisH and HisF.

The protein resides in the cytoplasm. The catalysed reaction is 5-[(5-phospho-1-deoxy-D-ribulos-1-ylimino)methylamino]-1-(5-phospho-beta-D-ribosyl)imidazole-4-carboxamide + L-glutamine = D-erythro-1-(imidazol-4-yl)glycerol 3-phosphate + 5-amino-1-(5-phospho-beta-D-ribosyl)imidazole-4-carboxamide + L-glutamate + H(+). It functions in the pathway amino-acid biosynthesis; L-histidine biosynthesis; L-histidine from 5-phospho-alpha-D-ribose 1-diphosphate: step 5/9. Functionally, IGPS catalyzes the conversion of PRFAR and glutamine to IGP, AICAR and glutamate. The HisF subunit catalyzes the cyclization activity that produces IGP and AICAR from PRFAR using the ammonia provided by the HisH subunit. This is Imidazole glycerol phosphate synthase subunit HisF from Geobacillus kaustophilus (strain HTA426).